A 246-amino-acid polypeptide reads, in one-letter code: Large ribosomal subunit protein uL3 (246 aa).

Disordered regions lie at residues 140–162 (SHRSIGSTGGRQDPGKTFKNKKM) and 215–246 (DVPLPGKFRENGSAGASQVEAAPEAPASEENA). Q151 bears the N5-methylglutamine mark. The segment covering 234–246 (EAAPEAPASEENA) has biased composition (low complexity).

This sequence belongs to the universal ribosomal protein uL3 family. As to quaternary structure, part of the 50S ribosomal subunit. Forms a cluster with proteins L14 and L19. Post-translationally, methylated by PrmB.

Functionally, one of the primary rRNA binding proteins, it binds directly near the 3'-end of the 23S rRNA, where it nucleates assembly of the 50S subunit. The chain is Large ribosomal subunit protein uL3 from Methylorubrum extorquens (strain PA1) (Methylobacterium extorquens).